The primary structure comprises 213 residues: ATP-dependent dethiobiotin synthetase BioD (213 aa).

Residue 13–18 (GIGKTV) participates in ATP binding. Residue Thr17 coordinates Mg(2+). Lys33 is a catalytic residue. Residue Glu100 coordinates Mg(2+). Residues 100–103 (EGAG) and 184–186 (PRL) contribute to the ATP site.

This sequence belongs to the dethiobiotin synthetase family. In terms of assembly, homodimer. Requires Mg(2+) as cofactor.

Its subcellular location is the cytoplasm. It carries out the reaction (7R,8S)-7,8-diammoniononanoate + CO2 + ATP = (4R,5S)-dethiobiotin + ADP + phosphate + 3 H(+). The protein operates within cofactor biosynthesis; biotin biosynthesis; biotin from 7,8-diaminononanoate: step 1/2. Catalyzes a mechanistically unusual reaction, the ATP-dependent insertion of CO2 between the N7 and N8 nitrogen atoms of 7,8-diaminopelargonic acid (DAPA, also called 7,8-diammoniononanoate) to form a ureido ring. This is ATP-dependent dethiobiotin synthetase BioD from Rhodopseudomonas palustris (strain HaA2).